Reading from the N-terminus, the 285-residue chain is Bifunctional protein FolD (285 aa).

Residues 166 to 168 (GAS), Ser-191, and Ile-232 contribute to the NADP(+) site.

It belongs to the tetrahydrofolate dehydrogenase/cyclohydrolase family. As to quaternary structure, homodimer.

The enzyme catalyses (6R)-5,10-methylene-5,6,7,8-tetrahydrofolate + NADP(+) = (6R)-5,10-methenyltetrahydrofolate + NADPH. It carries out the reaction (6R)-5,10-methenyltetrahydrofolate + H2O = (6R)-10-formyltetrahydrofolate + H(+). Its pathway is one-carbon metabolism; tetrahydrofolate interconversion. Catalyzes the oxidation of 5,10-methylenetetrahydrofolate to 5,10-methenyltetrahydrofolate and then the hydrolysis of 5,10-methenyltetrahydrofolate to 10-formyltetrahydrofolate. This is Bifunctional protein FolD from Actinobacillus pleuropneumoniae serotype 7 (strain AP76).